The primary structure comprises 176 residues: Ribosome rescue factor SmrB (176 aa).

The region spanning 98 to 173 is the Smr domain; it reads LDVHGLNQDQ…RSTAILFLIH (76 aa).

Belongs to the SmrB family. Associates with collided ribosomes, but not with correctly translating polysomes.

Its function is as follows. Acts as a ribosome collision sensor. Detects stalled/collided disomes (pairs of ribosomes where the leading ribosome is stalled and a second ribosome has collided with it) and endonucleolytically cleaves mRNA at the 5' boundary of the stalled ribosome. Stalled/collided disomes form a new interface (primarily via the 30S subunits) that binds SmrB. Cleaved mRNA becomes available for tmRNA ligation, leading to ribosomal subunit dissociation and rescue of stalled ribosomes. The sequence is that of Ribosome rescue factor SmrB from Buchnera aphidicola subsp. Baizongia pistaciae (strain Bp).